The primary structure comprises 515 residues: Carboxyl-terminal-processing peptidase 2, chloroplastic (515 aa).

Positions 198–286 (FKSLRSGTQG…SAVELAIRSG (89 aa)) constitute a PDZ domain. Catalysis depends on charge relay system residues Ser-417 and Lys-442.

This sequence belongs to the peptidase S41A family.

The protein localises to the plastid. It is found in the chloroplast thylakoid lumen. It carries out the reaction The enzyme shows specific recognition of a C-terminal tripeptide, Xaa-Yaa-Zaa, in which Xaa is preferably Ala or Leu, Yaa is preferably Ala or Tyr, and Zaa is preferably Ala, but then cleaves at a variable distance from the C-terminus. A typical cleavage is -Ala-Ala-|-Arg-Ala-Ala-Lys-Glu-Asn-Tyr-Ala-Leu-Ala-Ala.. Functionally, protease involved in the C-terminal processing of the chloroplastic D1 protein of photosystem II. This proteolytic processing is necessary to allow the light-driven assembly of the tetranuclear manganese cluster, which is responsible for photosynthetic water oxidation. This is Carboxyl-terminal-processing peptidase 2, chloroplastic (CTPA2) from Arabidopsis thaliana (Mouse-ear cress).